We begin with the raw amino-acid sequence, 734 residues long: Polyphosphate kinase (734 aa).

Asn-67 contacts ATP. Positions 392 and 422 each coordinate Mg(2+). In terms of domain architecture, PLD phosphodiesterase spans 447-481 (THLKTHSKIALVVKRINNELTSFVHLGTGNYNDKT). His-452 (phosphohistidine intermediate) is an active-site residue. ATP contacts are provided by Tyr-485, Arg-581, and His-609. Residues 705-734 (KKQSVQPSGQPVHSRRGGSWMRKLKNTFKR) form a disordered region.

It belongs to the polyphosphate kinase 1 (PPK1) family. Requires Mg(2+) as cofactor. In terms of processing, an intermediate of this reaction is the autophosphorylated ppk in which a phosphate is covalently linked to a histidine residue through a N-P bond.

It carries out the reaction [phosphate](n) + ATP = [phosphate](n+1) + ADP. Catalyzes the reversible transfer of the terminal phosphate of ATP to form a long-chain polyphosphate (polyP). This is Polyphosphate kinase from Staphylococcus epidermidis (strain ATCC 12228 / FDA PCI 1200).